A 159-amino-acid polypeptide reads, in one-letter code: Nascent polypeptide-associated complex subunit beta (159 aa).

Disordered stretches follow at residues 1-39 (MDME…GMDD) and 121-159 (ESYQ…DKVE). Residues 23–32 (TPRRKVKNVH) show a composition bias toward basic residues. The 66-residue stretch at 36–101 (GMDDKKLQTS…GEDKELTELV (66 aa)) folds into the NAC-A/B domain. Residues 136–153 (KDDDEDDDDIPDLVEGEN) show a composition bias toward acidic residues.

This sequence belongs to the NAC-beta family. Part of the nascent polypeptide-associated complex (NAC), consisting of EGD2 and EGD1. NAC associates with ribosomes via EGD1.

Its subcellular location is the cytoplasm. It is found in the nucleus. Component of the nascent polypeptide-associated complex (NAC), a dynamic component of the ribosomal exit tunnel, protecting the emerging polypeptides from interaction with other cytoplasmic proteins to ensure appropriate nascent protein targeting. The NAC complex also promotes mitochondrial protein import by enhancing productive ribosome interactions with the outer mitochondrial membrane and blocks the inappropriate interaction of ribosomes translating non-secretory nascent polypeptides with translocation sites in the membrane of the endoplasmic reticulum. EGD1 may act as a transcription factor that exert a negative effect on the expression of several genes that are transcribed by RNA polymerase II. This is Nascent polypeptide-associated complex subunit beta (egd1) from Botryotinia fuckeliana (strain B05.10) (Noble rot fungus).